Consider the following 451-residue polypeptide: Sensor histidine kinase CssS (451 aa).

The Cytoplasmic segment spans residues 1-9 (MKNKPLAFQ). Residues 10-30 (IWVVISGILLAISILLLVLFS) traverse the membrane as a helical segment. Residues 31 to 165 (NTLRDFFTNE…RDDLAYTLFK (135 aa)) lie on the Extracellular side of the membrane. The chain crosses the membrane as a helical span at residues 166 to 186 (QLLFIIAVVILLSWIPAIWLA). The 53-residue stretch at 187 to 239 (KYLSRPLVSFEKHVKRISEQDWDDPVKVDRKDEIGKLGHTIEEMRQKLVQKDE) folds into the HAMP domain. Topologically, residues 187–451 (KYLSRPLVSF…GVTYRIAVPK (265 aa)) are cytoplasmic. The region spanning 247-451 (NISHDLKTPV…GVTYRIAVPK (205 aa)) is the Histidine kinase domain. His250 carries the post-translational modification Phosphohistidine; by autocatalysis.

It is found in the cell membrane. It catalyses the reaction ATP + protein L-histidine = ADP + protein N-phospho-L-histidine.. Its function is as follows. Member of the two-component regulatory system CssS/CssR required to control the cellular response to secretion stress. Required for the transcription of htrA. Could detect misfolded proteins at the membrane-cell wall interface and then activate CssR by phosphorylation. The protein is Sensor histidine kinase CssS (cssS) of Bacillus subtilis (strain 168).